The sequence spans 170 residues: Large ribosomal subunit protein bL17 (170 aa).

The span at 124-134 shows a compositional bias: low complexity; it reads AAEAPKAAKAA. Residues 124–170 form a disordered region; it reads AAEAPKAAKAAPVKEAKPAAEEAPAKPKRTRKPKADEADAEAAKEEN. Basic and acidic residues-rich tracts occupy residues 135-148 and 156-170; these read PVKE…EAPA and PKAD…KEEN.

This sequence belongs to the bacterial ribosomal protein bL17 family. Part of the 50S ribosomal subunit. Contacts protein L32.

In Desulfovibrio desulfuricans (strain ATCC 27774 / DSM 6949 / MB), this protein is Large ribosomal subunit protein bL17.